Here is an 828-residue protein sequence, read N- to C-terminus: Periplasmic nitrate reductase 1 (828 aa).

The segment at residues 1-30 (MKMTRRAFVKANAAASAAAVAGITLPASAA) is a signal peptide (tat-type signal). In terms of domain architecture, 4Fe-4S Mo/W bis-MGD-type spans 41–97 (IKWDKAPCRFCGTGCSVLVGTQNGRVVATQGDPEAPVNKGLNCIKGYFLSKIMYGKD). Positions 48, 51, 55, and 83 each coordinate [4Fe-4S] cluster. Residues Lys85, Gln152, Asn177, Cys181, 214–221 (WGSNMAEM), 245–249 (STYYH), 264–266 (QTD), Met374, Gln378, Asn484, 510–511 (SD), Lys533, Asp560, and 718–727 (TGRVLEHWHT) contribute to the Mo-bis(molybdopterin guanine dinucleotide) site. Substrate is bound at residue Phe794. Mo-bis(molybdopterin guanine dinucleotide) is bound by residues Asn802 and Lys819.

The protein belongs to the prokaryotic molybdopterin-containing oxidoreductase family. NasA/NapA/NarB subfamily. In terms of assembly, component of the periplasmic nitrate reductase NapAB complex composed of NapA and NapB. It depends on [4Fe-4S] cluster as a cofactor. Mo-bis(molybdopterin guanine dinucleotide) serves as cofactor. Post-translationally, predicted to be exported by the Tat system. The position of the signal peptide cleavage has not been experimentally proven.

It is found in the periplasm. It catalyses the reaction 2 Fe(II)-[cytochrome] + nitrate + 2 H(+) = 2 Fe(III)-[cytochrome] + nitrite + H2O. Its function is as follows. Catalytic subunit of the periplasmic nitrate reductase complex NapAB. Receives electrons from NapB and catalyzes the reduction of nitrate to nitrite. In Photobacterium profundum (strain SS9), this protein is Periplasmic nitrate reductase 1.